The primary structure comprises 204 residues: Venom allergen 5 (204 aa).

4 disulfide bridges follow: Cys4–Cys17, Cys8–Cys101, Cys26–Cys94, and Cys170–Cys187. In terms of domain architecture, SCP spans 45-189 (LKEHNDFRQK…WHKHYLVCNY (145 aa)).

The protein belongs to the CRISP family. Venom allergen 5-like subfamily. Expressed by the venom gland.

Its subcellular location is the secreted. The protein is Venom allergen 5 of Vespula maculifrons (Eastern yellow jacket).